Here is a 234-residue protein sequence, read N- to C-terminus: NAD-dependent protein deacylase (234 aa).

One can recognise a Deacetylase sirtuin-type domain in the interval Met1–Leu234. Residue Gly12 to Trp31 coordinates NAD(+). 2 residues coordinate substrate: Tyr56 and Arg59. Gln93–Asp96 is a binding site for NAD(+). His111 serves as the catalytic Proton acceptor. The Zn(2+) site is built by Cys119 and Cys138. Residues Gly178–Ser180, Asn204–Glu206, and Ala222 each bind NAD(+).

Belongs to the sirtuin family. Class III subfamily. Zn(2+) is required as a cofactor.

It localises to the cytoplasm. It carries out the reaction N(6)-acetyl-L-lysyl-[protein] + NAD(+) + H2O = 2''-O-acetyl-ADP-D-ribose + nicotinamide + L-lysyl-[protein]. It catalyses the reaction N(6)-succinyl-L-lysyl-[protein] + NAD(+) + H2O = 2''-O-succinyl-ADP-D-ribose + nicotinamide + L-lysyl-[protein]. In terms of biological role, NAD-dependent lysine deacetylase and desuccinylase that specifically removes acetyl and succinyl groups on target proteins. Modulates the activities of several proteins which are inactive in their acylated form. The protein is NAD-dependent protein deacylase of Pasteurella multocida (strain Pm70).